We begin with the raw amino-acid sequence, 149 residues long: Probable ubiquitin-conjugating enzyme E2 W (149 aa).

The UBC core domain maps to Arg-4–Val-149. The Glycyl thioester intermediate role is filled by Cys-88.

Belongs to the ubiquitin-conjugating enzyme family.

The enzyme catalyses S-ubiquitinyl-[E1 ubiquitin-activating enzyme]-L-cysteine + [E2 ubiquitin-conjugating enzyme]-L-cysteine = [E1 ubiquitin-activating enzyme]-L-cysteine + S-ubiquitinyl-[E2 ubiquitin-conjugating enzyme]-L-cysteine.. It carries out the reaction S-ubiquitinyl-[E1 ubiquitin-activating enzyme]-L-cysteine + [acceptor protein]-N-terminal-amino acid = [E1 ubiquitin-activating enzyme]-L-cysteine + N-terminal-ubiquitinyl-[acceptor protein].. Its pathway is protein modification; protein ubiquitination. Catalyzes the covalent attachment of ubiquitin to other proteins. The polypeptide is Probable ubiquitin-conjugating enzyme E2 W (ube2w) (Dictyostelium discoideum (Social amoeba)).